The following is a 195-amino-acid chain: Imidazoleglycerol-phosphate dehydratase (195 aa).

It belongs to the imidazoleglycerol-phosphate dehydratase family.

The protein resides in the cytoplasm. It catalyses the reaction D-erythro-1-(imidazol-4-yl)glycerol 3-phosphate = 3-(imidazol-4-yl)-2-oxopropyl phosphate + H2O. It functions in the pathway amino-acid biosynthesis; L-histidine biosynthesis; L-histidine from 5-phospho-alpha-D-ribose 1-diphosphate: step 6/9. The protein is Imidazoleglycerol-phosphate dehydratase of Bordetella bronchiseptica (strain ATCC BAA-588 / NCTC 13252 / RB50) (Alcaligenes bronchisepticus).